Consider the following 147-residue polypeptide: D-aminoacyl-tRNA deacylase (147 aa).

The short motif at 137–138 (GP) is the Gly-cisPro motif, important for rejection of L-amino acids element.

The protein belongs to the DTD family. Homodimer.

It localises to the cytoplasm. The enzyme catalyses glycyl-tRNA(Ala) + H2O = tRNA(Ala) + glycine + H(+). The catalysed reaction is a D-aminoacyl-tRNA + H2O = a tRNA + a D-alpha-amino acid + H(+). Its function is as follows. An aminoacyl-tRNA editing enzyme that deacylates mischarged D-aminoacyl-tRNAs. Also deacylates mischarged glycyl-tRNA(Ala), protecting cells against glycine mischarging by AlaRS. Acts via tRNA-based rather than protein-based catalysis; rejects L-amino acids rather than detecting D-amino acids in the active site. By recycling D-aminoacyl-tRNA to D-amino acids and free tRNA molecules, this enzyme counteracts the toxicity associated with the formation of D-aminoacyl-tRNA entities in vivo and helps enforce protein L-homochirality. The chain is D-aminoacyl-tRNA deacylase from Exiguobacterium sp. (strain ATCC BAA-1283 / AT1b).